Here is a 449-residue protein sequence, read N- to C-terminus: Type 3 secretion system ATPase (449 aa).

G178 to T183 provides a ligand contact to ATP.

Belongs to the ATPase alpha/beta chains family. T3SS ATPase subfamily. The core secretion machinery of the T3SS is composed of approximately 20 different proteins, including cytoplasmic components, a base, an export apparatus and a needle. This subunit is part of the cytosolic complex. Forms homododecamers.

It localises to the cytoplasm. The enzyme catalyses ATP + H2O + cellular proteinSide 1 = ADP + phosphate + cellular proteinSide 2.. In terms of biological role, ATPase component of the type III secretion system (T3SS), also called injectisome, which is used to inject bacterial effector proteins into eukaryotic host cells. Acts as a molecular motor to provide the energy that is required for the export of proteins. Required for type III secretion apparatus (T3SA) formation, proper protein secretion, host cell invasion and virulence. May play a critical role in T3SS substrate recognition, disassembly of the effector/chaperone complex and unfolding of the effector in an ATP-dependent manner prior to secretion. This Pseudomonas syringae pv. syringae protein is Type 3 secretion system ATPase.